We begin with the raw amino-acid sequence, 258 residues long: L-fucose dehydrogenase (258 aa).

Serine 17, isoleucine 19, arginine 39, histidine 40, glutamate 63, leucine 64, and asparagine 90 together coordinate NADP(+). 5 residues coordinate beta-L-fucose: asparagine 94, serine 140, lysine 141, glutamine 147, and tyrosine 153. 2 residues coordinate NADP(+): tyrosine 153 and lysine 157. The active-site Proton acceptor is tyrosine 153. Residues alanine 184 and glutamate 185 each contribute to the beta-L-fucose site. Residues valine 186 and threonine 188 each coordinate NADP(+).

This sequence belongs to the short-chain dehydrogenases/reductases (SDR) family. In terms of assembly, homotetramer; dimer of dimers.

It carries out the reaction beta-L-fucose + NADP(+) = L-fucono-1,5-lactone + NADPH + H(+). The enzyme catalyses D-arabinose + NADP(+) = D-arabinono-1,5-lactone + NADPH + H(+). It functions in the pathway carbohydrate degradation; L-fucose degradation. In terms of biological role, L-fucose dehydrogenase involved in an L-fucose degradation pathway. Catalyzes the oxidation of L-fucose to L-fucono-1,5-lactone. Can also act on D-arabinose, with lower catalytic efficiency, and has weak activity with L-galactose and 4-deoxy-L-fucose. Shows a preference for NADP(+) over NAD(+). The chain is L-fucose dehydrogenase from Burkholderia multivorans (strain ATCC 17616 / 249).